The following is a 661-amino-acid chain: MAPSADPGMSRMLPFLLLLWFLPITEGSQRAEPMFTAVTNSVLPPDYDSNPTQLNYGVAVTDVDHDGDFEIVVAGYNGPNLVLKYDRAQKRLVNIAVDERSSPYYALRDRQGNAIGVTACDIDGDGREEIYFLNTNNAFSGVATYTDKLFKFRNNRWEDILSDEVNVARGVASLFAGRSVACVDRKGSGRYSIYIANYAYGNVGPDALIEMDPEASDLSRGILALRDVAAEAGVSKYTGGRGVSVGPILSSSASDIFCDNENGPNFLFHNRGDGTFVDAAASAGVDDPHQHGRGVALADFNRDGKVDIVYGNWNGPHRLYLQMSTHGKVRFRDIASPKFSMPSPVRTVITADFDNDQELEIFFNNIAYRSSSANRLFRVIRREHGDPLIEELNPGDALEPEGRGTGGVVTDFDGDGMLDLILSHGESMAQPLSVFRGNQGFNNNWLRVVPRTRFGAFARGAKVVLYTKKSGAHLRIIDGGSGYLCEMEPVAHFGLGKDEASSVEVTWPDGKMVSRNVASGEMNSVLEILYPRDEDTLQDPAPLECGQGFSQQENGHCMDTNECIQFPFVCPRDKPVCVNTYGSYRCRTNKKCSRGYEPNEDGTACVGTLGQSPGPRPTTPTAAAATAAAAAAAGAATAAPVLVDGDLNLGSVVKESCEPSC.

The signal sequence occupies residues 1–27 (MAPSADPGMSRMLPFLLLLWFLPITEG). An FG-GAP 1; atypical repeat occupies 46-88 (DYDSNPTQLNYGVAVTDVDHDGDFEIVVAGYNGPNLVLKYDRA). The stretch at 105–147 (YALRDRQGNAIGVTACDIDGDGREEIYFLNTNNAFSGVATYTD) is one FG-GAP 2; atypical repeat. An FG-GAP 3; atypical repeat occupies 283 to 333 (AGVDDPHQHGRGVALADFNRDGKVDIVYGNWNGPHRLYLQMSTHGKVRFRD). The FG-GAP 4; atypical repeat unit spans residues 395–437 (GDALEPEGRGTGGVVTDFDGDGMLDLILSHGESMAQPLSVFRG). The 47-residue stretch at 559–605 (DTNECIQFPFVCPRDKPVCVNTYGSYRCRTNKKCSRGYEPNEDGTAC) folds into the EGF-like domain. 3 disulfides stabilise this stretch: Cys-563–Cys-577, Cys-570–Cys-586, and Cys-592–Cys-605. O-linked (GalNAc...) threonine glycans are attached at residues Thr-608, Thr-618, Thr-619, Thr-621, and Thr-626.

O-glycosylated. Expressed in the interterritorial matrix of articular deep zone cartilage (at protein level). Isoform 1 and isoform 2 are expressed in brain. Isoform 1 is detected in lung and chondrocytes. Detected in cartilage, bone, cultured chondrocytes and lung, and at low levels in heart. Not detected in osteoblasts.

Its subcellular location is the secreted. It localises to the extracellular space. The protein localises to the extracellular matrix. In Homo sapiens (Human), this protein is Cartilage acidic protein 1 (CRTAC1).